Consider the following 248-residue polypeptide: Triosephosphate isomerase (248 aa).

Residue 9–11 (NWK) participates in substrate binding. Catalysis depends on H94, which acts as the Electrophile. The Proton acceptor role is filled by E164. Substrate is bound by residues G170, S209, and 230–231 (GG).

Belongs to the triosephosphate isomerase family. In terms of assembly, homodimer.

The protein localises to the cytoplasm. The catalysed reaction is D-glyceraldehyde 3-phosphate = dihydroxyacetone phosphate. The protein operates within carbohydrate biosynthesis; gluconeogenesis. It participates in carbohydrate degradation; glycolysis; D-glyceraldehyde 3-phosphate from glycerone phosphate: step 1/1. Functionally, involved in the gluconeogenesis. Catalyzes stereospecifically the conversion of dihydroxyacetone phosphate (DHAP) to D-glyceraldehyde-3-phosphate (G3P). The chain is Triosephosphate isomerase from Hahella chejuensis (strain KCTC 2396).